A 343-amino-acid polypeptide reads, in one-letter code: Dihydroorotase (343 aa).

Zn(2+) contacts are provided by histidine 13 and histidine 15. Substrate-binding positions include 15-17 (HFR) and asparagine 41. Zn(2+) is bound by residues lysine 98, histidine 135, and histidine 173. Position 98 is an N6-carboxylysine (lysine 98). Histidine 135 provides a ligand contact to substrate. Residue leucine 218 coordinates substrate. Aspartate 246 serves as a coordination point for Zn(2+). Aspartate 246 is an active-site residue. The substrate site is built by histidine 250 and alanine 262.

This sequence belongs to the metallo-dependent hydrolases superfamily. DHOase family. Class II DHOase subfamily. In terms of assembly, homodimer. Zn(2+) is required as a cofactor.

It catalyses the reaction (S)-dihydroorotate + H2O = N-carbamoyl-L-aspartate + H(+). It functions in the pathway pyrimidine metabolism; UMP biosynthesis via de novo pathway; (S)-dihydroorotate from bicarbonate: step 3/3. Its function is as follows. Catalyzes the reversible cyclization of carbamoyl aspartate to dihydroorotate. The sequence is that of Dihydroorotase from Marinomonas sp. (strain MWYL1).